The following is a 206-amino-acid chain: Small ribosomal subunit protein uS4 (206 aa).

Positions arginine 94–isoleucine 157 constitute an S4 RNA-binding domain.

This sequence belongs to the universal ribosomal protein uS4 family. As to quaternary structure, part of the 30S ribosomal subunit. Contacts protein S5. The interaction surface between S4 and S5 is involved in control of translational fidelity.

In terms of biological role, one of the primary rRNA binding proteins, it binds directly to 16S rRNA where it nucleates assembly of the body of the 30S subunit. Functionally, with S5 and S12 plays an important role in translational accuracy. In Roseiflexus sp. (strain RS-1), this protein is Small ribosomal subunit protein uS4.